The chain runs to 361 residues: Phospho-N-acetylmuramoyl-pentapeptide-transferase (361 aa).

A run of 10 helical transmembrane segments spans residues 26–46 (AGGA…CIIE), 71–91 (TPTM…FLWA), 97–117 (FILW…CDDY), 134–154 (IFGQ…FPSN), 168–188 (GFFI…IVGS), 200–220 (GLAI…AYFA), 236–256 (GAGE…GFLW), 264–284 (IFMG…VSLF), 290–310 (VLVL…IQIF), and 338–358 (KVTV…FASL).

Belongs to the glycosyltransferase 4 family. MraY subfamily. The cofactor is Mg(2+).

Its subcellular location is the cell membrane. The catalysed reaction is UDP-N-acetyl-alpha-D-muramoyl-L-alanyl-gamma-D-glutamyl-meso-2,6-diaminopimeloyl-D-alanyl-D-alanine + di-trans,octa-cis-undecaprenyl phosphate = di-trans,octa-cis-undecaprenyl diphospho-N-acetyl-alpha-D-muramoyl-L-alanyl-D-glutamyl-meso-2,6-diaminopimeloyl-D-alanyl-D-alanine + UMP. It functions in the pathway cell wall biogenesis; peptidoglycan biosynthesis. Catalyzes the initial step of the lipid cycle reactions in the biosynthesis of the cell wall peptidoglycan: transfers peptidoglycan precursor phospho-MurNAc-pentapeptide from UDP-MurNAc-pentapeptide onto the lipid carrier undecaprenyl phosphate, yielding undecaprenyl-pyrophosphoryl-MurNAc-pentapeptide, known as lipid I. The chain is Phospho-N-acetylmuramoyl-pentapeptide-transferase from Endomicrobium trichonymphae.